The chain runs to 312 residues: Malate dehydrogenase (312 aa).

NAD(+)-binding positions include 7-13 (GAAGGIG) and Asp-34. Substrate-binding residues include Arg-81 and Arg-87. NAD(+)-binding positions include Asn-94 and 117-119 (ITN). Substrate is bound by residues Asn-119 and Arg-153. Residue His-177 is the Proton acceptor of the active site. NAD(+) is bound at residue Met-227.

It belongs to the LDH/MDH superfamily. MDH type 1 family. In terms of assembly, homodimer.

It carries out the reaction (S)-malate + NAD(+) = oxaloacetate + NADH + H(+). Functionally, catalyzes the reversible oxidation of malate to oxaloacetate. This chain is Malate dehydrogenase, found in Serratia proteamaculans (strain 568).